The chain runs to 759 residues: DNA topoisomerase 4 subunit A (759 aa).

The region spanning 44-516 (LPDVRDGLKP…VFGEAPQVDA (473 aa)) is the Topo IIA-type catalytic domain. The active-site O-(5'-phospho-DNA)-tyrosine intermediate is Tyr-132.

This sequence belongs to the type II topoisomerase GyrA/ParC subunit family. ParC type 1 subfamily. Heterotetramer composed of ParC and ParE.

The protein localises to the cell membrane. It carries out the reaction ATP-dependent breakage, passage and rejoining of double-stranded DNA.. Its function is as follows. Topoisomerase IV is essential for chromosome segregation. It relaxes supercoiled DNA. Performs the decatenation events required during the replication of a circular DNA molecule. In Caulobacter vibrioides (strain ATCC 19089 / CIP 103742 / CB 15) (Caulobacter crescentus), this protein is DNA topoisomerase 4 subunit A.